Consider the following 704-residue polypeptide: Mannan-binding lectin serine protease 1 (704 aa).

Positions 1 to 24 (MRFLSFRRLLLYHVLCLTLTEVSA) are cleaved as a signal peptide. One can recognise a CUB 1 domain in the interval 25 to 143 (HTVELNEMFG…TGFDAHYMAV (119 aa)). The segment at 25 to 189 (HTVELNEMFG…HTDNRTCRVE (165 aa)) is homodimerization. Positions 25-189 (HTVELNEMFG…HTDNRTCRVE (165 aa)) are interaction with MBL2. Residues 25-283 (HTVELNEMFG…STQSHSIQIL (259 aa)) form an interaction with FCN2 region. The segment at 25–305 (HTVELNEMFG…RLSYRAAGNE (281 aa)) is interaction with MBL1. Asn54 carries an N-linked (GlcNAc...) asparagine glycan. Ca(2+) contacts are provided by Glu73, Asp81, Asp126, Ser128, Asp144, Val145, and Glu147. The cysteines at positions 78 and 96 are disulfide-linked. One can recognise an EGF-like; calcium-binding domain in the interval 144–187 (DVDECKEREDEELSCDHYCHNYIGGYYCSCRFGYILHTDNRTCR). 4 cysteine pairs are disulfide-bonded: Cys148–Cys162, Cys158–Cys171, Cys173–Cys186, and Cys190–Cys217. Ca(2+) is bound by residues Asn164, Tyr165, and Gly168. Residue Asn164 is modified to (3R)-3-hydroxyasparagine. An N-linked (GlcNAc...) asparagine glycan is attached at Asn183. A CUB 2 domain is found at 190–302 (CSGNLFTQRT…RGWRLSYRAA (113 aa)). Ca(2+) contacts are provided by Glu240, Asp250, Asp287, and Ser289. Cys247 and Cys265 are disulfide-bonded. 2 consecutive Sushi domains span residues 304-369 (NECP…TCKI) and 370-439 (VDCG…TCLP). Disulfide bonds link Cys306-Cys354, Cys334-Cys367, Cys372-Cys419, Cys402-Cys437, Cys441-Cys577, and Cys480-Cys496. Residues Asn390 and Asn412 are each glycosylated (N-linked (GlcNAc...) asparagine). The 248-residue stretch at 454-701 (IFNGRPAQKG…NKDWIQRVTG (248 aa)) folds into the Peptidase S1 domain. The active-site Charge relay system is His495. Leu538 carries an N-linked (GlcNAc...) asparagine glycan. Residue Asp557 is the Charge relay system of the active site. Glu604 carries an N-linked (GlcNAc...) asparagine glycan. 2 cysteine pairs are disulfide-bonded: Cys619–Cys636 and Cys647–Cys677. Ser651 acts as the Charge relay system in catalysis.

The protein belongs to the peptidase S1 family. Homodimer. Interacts with the oligomeric lectins MBL2, FCN2 and FCN3; triggers the lectin pathway of complement through activation of C3. Interacts with SERPING1. Interacts with COLEC11; probably triggers the lectin pathway of complement. In terms of processing, the iron and 2-oxoglutarate dependent 3-hydroxylation of aspartate and asparagine is (R) stereospecific within EGF domains. Post-translationally, N-glycosylated. Some N-linked glycan are of the complex-type. Autoproteolytic processing of the proenzyme produces the active enzyme composed on the heavy and the light chain held together by a disulfide bond. Isoform 1 but not isoform 2 is activated through autoproteolytic processing. In terms of tissue distribution, protein of the plasma which is primarily expressed by liver.

It localises to the secreted. Its activity is regulated as follows. Inhibited by SERPING1 and A2M. In terms of biological role, functions in the lectin pathway of complement, which performs a key role in innate immunity by recognizing pathogens through patterns of sugar moieties and neutralizing them. The lectin pathway is triggered upon binding of mannan-binding lectin (MBL) and ficolins to sugar moieties which leads to activation of the associated proteases MASP1 and MASP2. Functions as an endopeptidase and may activate MASP2 or C2 or directly activate C3 the key component of complement reaction. Isoform 2 may have an inhibitory effect on the activation of the lectin pathway of complement or may cleave IGFBP5. Also plays a role in development. In Rattus norvegicus (Rat), this protein is Mannan-binding lectin serine protease 1 (Masp1).